A 365-amino-acid polypeptide reads, in one-letter code: Sulfate/thiosulfate import ATP-binding protein CysA (365 aa).

Positions 3–237 (IEIANIKKSF…PATRFVLEFM (235 aa)) constitute an ABC transporter domain. 35-42 (GPSGSGKT) contacts ATP.

Belongs to the ABC transporter superfamily. Sulfate/tungstate importer (TC 3.A.1.6) family. The complex is composed of two ATP-binding proteins (CysA), two transmembrane proteins (CysT and CysW) and a solute-binding protein (CysP).

The protein localises to the cell inner membrane. The catalysed reaction is sulfate(out) + ATP + H2O = sulfate(in) + ADP + phosphate + H(+). It carries out the reaction thiosulfate(out) + ATP + H2O = thiosulfate(in) + ADP + phosphate + H(+). Its function is as follows. Part of the ABC transporter complex CysAWTP involved in sulfate/thiosulfate import. Responsible for energy coupling to the transport system. This Escherichia coli O157:H7 protein is Sulfate/thiosulfate import ATP-binding protein CysA.